The sequence spans 222 residues: MAAEVILLGFWPSMFGMRTMIALEEKGVKYEYREEDVINNKSPLLLEMNPIHKTIPVLIHNGKPVLESLIQIQYIDEVWSDNNSFLPSDPYHRAQALFWADFIDKKEQLYVCGRKTWATKGEELEAANKEFIEILKTLQCELGEKPYFGGDKFGFVDIVLIGFYSWFPAYQKFGNFSIEPECLKLIAWGKRCMQRESVAKALPDSEKVVGYVLQLKKLYGIE.

The GST N-terminal domain occupies 3-83; sequence AEVILLGFWP…YIDEVWSDNN (81 aa). Glutathione-binding positions include 13–14, 40–41, 54–55, and 67–68; these read SM, NK, TI, and ES. In terms of domain architecture, GST C-terminal spans 89 to 211; sequence DPYHRAQALF…LPDSEKVVGY (123 aa).

Belongs to the GST superfamily. Tau family.

The protein localises to the cytoplasm. It is found in the cytosol. The catalysed reaction is RX + glutathione = an S-substituted glutathione + a halide anion + H(+). Its function is as follows. May be involved in the conjugation of reduced glutathione to a wide number of exogenous and endogenous hydrophobic electrophiles and have a detoxification role against certain herbicides. This is Glutathione S-transferase U21 (GSTU21) from Arabidopsis thaliana (Mouse-ear cress).